Consider the following 241-residue polypeptide: Peroxisomal membrane protein 11C (241 aa).

Topologically, residues 1-124 are cytoplasmic; it reads MASLSGLASA…ARVLHVDSSR (124 aa). Residues 125-149 traverse the membrane as a helical segment; sequence WWTLSTTLWALSLLLGVARSLWMLL. The Lumenal segment spans residues 150–211; the sequence is KLRQRLRSPT…GVLWAGRFPP (62 aa). A helical membrane pass occupies residues 212–227; sequence WLVGLMGTISSILSMY. At 228–241 the chain is on the cytoplasmic side; that stretch reads QAARAGGQAEATTP.

This sequence belongs to the peroxin-11 family. In terms of assembly, homodimer. Heterodimer with either PEX11A or PEX11B. Interacts with FIS1.

The protein localises to the peroxisome membrane. Functionally, promotes membrane protrusion and elongation on the peroxisomal surface. This Homo sapiens (Human) protein is Peroxisomal membrane protein 11C (PEX11G).